A 491-amino-acid polypeptide reads, in one-letter code: Polybrominated aromatic compounds synthase (491 aa).

Cysteine 437 lines the heme pocket.

This sequence belongs to the cytochrome P450 family. The cofactor is heme.

In terms of biological role, cytochrome P450 protein involved in the biosynthesis of polybrominated aromatic organic compounds. In the presence of ferredoxin, ferredoxin reductase and NADH, catalyzes the coupling of bromophenols and bromopyrroles, forming various polybrominated biphenyls and hydroxylated polybrominated diphenyl ethers (OH-BDE). Can also mediate the heterocoupling of 3,5-dibromocatechol. Can also use chlorinated phenolic substrates. 2,3,4-tribromopyrrole could be the physiological substrate. This Pseudoalteromonas luteoviolacea (strain 2ta16) protein is Polybrominated aromatic compounds synthase.